Here is a 376-residue protein sequence, read N- to C-terminus: Anhydro-N-acetylmuramic acid kinase (376 aa).

11–18 (GTSMDGVD) contributes to the ATP binding site.

The protein belongs to the anhydro-N-acetylmuramic acid kinase family.

The catalysed reaction is 1,6-anhydro-N-acetyl-beta-muramate + ATP + H2O = N-acetyl-D-muramate 6-phosphate + ADP + H(+). It participates in amino-sugar metabolism; 1,6-anhydro-N-acetylmuramate degradation. Its pathway is cell wall biogenesis; peptidoglycan recycling. Catalyzes the specific phosphorylation of 1,6-anhydro-N-acetylmuramic acid (anhMurNAc) with the simultaneous cleavage of the 1,6-anhydro ring, generating MurNAc-6-P. Is required for the utilization of anhMurNAc either imported from the medium or derived from its own cell wall murein, and thus plays a role in cell wall recycling. In Acinetobacter baylyi (strain ATCC 33305 / BD413 / ADP1), this protein is Anhydro-N-acetylmuramic acid kinase.